The primary structure comprises 117 residues: Hydrogenase maturation factor HypA (117 aa).

His-2 is a Ni(2+) binding site. Cys-73, Cys-76, Cys-89, and Cys-92 together coordinate Zn(2+).

This sequence belongs to the HypA/HybF family.

In terms of biological role, involved in the maturation of [NiFe] hydrogenases. Required for nickel insertion into the metal center of the hydrogenase. In Shewanella baltica (strain OS223), this protein is Hydrogenase maturation factor HypA.